A 598-amino-acid chain; its full sequence is MCGIVGYIGNNEKKQIILNGLKELEYRGYDSAGMAVMQEGELSFFKAVGKLENLANKCTDFESQGYGFAIGHTRWATHGKPTEINAHPHLGQYSCVIHNGIIENYKEIKDKLEKEGVSFLSQTDTEVIVQLFEFYARNLGVFEAWQKTIKELRGAFATLLVTKKDPNHVYFAKNAAPLIIGKNANKEWYFSSGDAPLIGSCDEVMYLEDLSLGYASKDELVVYENDILKSLCFSKLSGDKAYAKKDGFRFFMEKEIYEQSRVMSEVLMGRIQGDEVVFDELNNEDLSQVDEITLCACGTSYHAAMASAYLFERIAKVKAKVEIASEFRYREAIIKKDSLFIVISQSGETADTLEALKIAKEQGAKTFAICNVDNSNIVRLAHLSLLTRAGIEKGVASTKAFATQVLTLWMLAIFMAQKRNLNVSAEIKALLHTPNCVSVKQALHEKIHRLSKRYLDGHGFFFIGRDVFYPLALEGALKLKELSYLHAEGYPAGEMKHGPIALADSKLYTIALMPKHMLYEKTKSNVEELIARDSTVLSISPLEFDLSDDFIKTNEQDHYMCEFFEMMVITQLLAMEISIRLGNDVDMPRNLAKSVTVE.

C2 acts as the Nucleophile; for GATase activity in catalysis. The Glutamine amidotransferase type-2 domain occupies 2 to 218; the sequence is CGIVGYIGNN…DLSLGYASKD (217 aa). 2 consecutive SIS domains span residues 277 to 421 and 450 to 588; these read VFDE…KRNL and LSKR…VDMP. The active-site For Fru-6P isomerization activity is K593.

In terms of assembly, homodimer.

It is found in the cytoplasm. The enzyme catalyses D-fructose 6-phosphate + L-glutamine = D-glucosamine 6-phosphate + L-glutamate. Its function is as follows. Catalyzes the first step in hexosamine metabolism, converting fructose-6P into glucosamine-6P using glutamine as a nitrogen source. This chain is Glutamine--fructose-6-phosphate aminotransferase [isomerizing], found in Campylobacter jejuni subsp. jejuni serotype O:2 (strain ATCC 700819 / NCTC 11168).